We begin with the raw amino-acid sequence, 364 residues long: Putative agmatine deiminase (364 aa).

Cysteine 355 serves as the catalytic Amidino-cysteine intermediate.

It belongs to the agmatine deiminase family.

It carries out the reaction agmatine + H2O = N-carbamoylputrescine + NH4(+). In Mycoplasma capricolum subsp. capricolum (strain California kid / ATCC 27343 / NCTC 10154), this protein is Putative agmatine deiminase.